We begin with the raw amino-acid sequence, 326 residues long: Tetraacyldisaccharide 4'-kinase (326 aa).

53-60 (SVGGNGKT) provides a ligand contact to ATP.

This sequence belongs to the LpxK family.

It catalyses the reaction a lipid A disaccharide + ATP = a lipid IVA + ADP + H(+). It participates in glycolipid biosynthesis; lipid IV(A) biosynthesis; lipid IV(A) from (3R)-3-hydroxytetradecanoyl-[acyl-carrier-protein] and UDP-N-acetyl-alpha-D-glucosamine: step 6/6. Transfers the gamma-phosphate of ATP to the 4'-position of a tetraacyldisaccharide 1-phosphate intermediate (termed DS-1-P) to form tetraacyldisaccharide 1,4'-bis-phosphate (lipid IVA). The chain is Tetraacyldisaccharide 4'-kinase from Actinobacillus pleuropneumoniae serotype 5b (strain L20).